We begin with the raw amino-acid sequence, 114 residues long: Large ribosomal subunit protein uL24 (114 aa).

This sequence belongs to the universal ribosomal protein uL24 family. Part of the 50S ribosomal subunit.

One of two assembly initiator proteins, it binds directly to the 5'-end of the 23S rRNA, where it nucleates assembly of the 50S subunit. Functionally, one of the proteins that surrounds the polypeptide exit tunnel on the outside of the subunit. This is Large ribosomal subunit protein uL24 from Thermomicrobium roseum (strain ATCC 27502 / DSM 5159 / P-2).